The primary structure comprises 93 residues: Transcription factor RADIALIS (93 aa).

The SANT domain occupies 6–61 (GSGRPWSAKENKAFERALAVYDKDTPDRWANVARAVEGRTPEEVKKHYEILVEDIK).

In terms of tissue distribution, specifically expressed in the dorsal region of developing flowers.

The protein resides in the nucleus. In terms of biological role, involved in the dorsovental asymmetry of flowers. Promotes dorsal identity. In Antirrhinum majus (Garden snapdragon), this protein is Transcription factor RADIALIS (RAD).